Consider the following 524-residue polypeptide: MSSGYKPGKKRIIQPIQPIKKELIDFHGCQIPKECEPYLERTNVSLIIKKGFINGMKNDAEMFCNEDLFELLMNELLNEQPGASFSSCVRQTANVATLPGVIKSLAMPDAHSGYGFSIGGVAAMRLDDPNAVICPGGVGFDINCGVRLLRTNLDDKDIEPHLAELADALQKNIPSGVGTTSTQTLTEKEMNEIMNEGLEWLVKKGLAWKEDLVYCEENGRIINSDPHLVSQKARGRGRNQLGTLGSGNHYLEIQRVDEIMDKEAAKQMGISHIGQICIMIHCGSRGLGHQVCQDFVDMCVSQSNKNEVDIQLTGVPFQSDNGQKYFKAMNAAANYAFANRGMISYHVRCTFEQVFQKSPKDLDMHLVYDVCHNIAKEESHLVDGKEIKCIVHRKGATRAFAPLNPVIPDAYKPIGQPAIIGGSMGTCSYMLVGTQEGMKKSFGSTCHGAGRKISRVNAMKNISSDSVVEEMKKKGIELRITDPKLAAEEADDAYKDVKEVVETCQSAGISRIVFKLKPLIVVKG.

Mn(2+) is bound by residues Asp-141, Cys-144, His-249, His-281, and His-372. Position 248–252 (248–252) interacts with GMP; that stretch reads NHYLE. GMP contacts are provided by residues 372–373, 421–424, Ser-428, 447–450, and Lys-523; these read HN, GGSM, and HGAG. His-447 functions as the GMP-histidine intermediate in the catalytic mechanism.

The protein belongs to the RtcB family. As to quaternary structure, catalytic component of the tRNA-splicing ligase complex. It depends on Mn(2+) as a cofactor.

It catalyses the reaction a 3'-end 3'-phospho-ribonucleotide-RNA + a 5'-end dephospho-ribonucleoside-RNA + GTP = a ribonucleotidyl-ribonucleotide-RNA + GMP + diphosphate. It carries out the reaction a 3'-end 2',3'-cyclophospho-ribonucleotide-RNA + a 5'-end dephospho-ribonucleoside-RNA + GTP + H2O = a ribonucleotidyl-ribonucleotide-RNA + GMP + diphosphate + H(+). Catalytic subunit of the tRNA-splicing ligase complex that acts by directly joining spliced tRNA halves to mature-sized tRNAs by incorporating the precursor-derived splice junction phosphate into the mature tRNA as a canonical 3',5'-phosphodiester. May act as an RNA ligase with broad substrate specificity, and may function toward other RNAs. The chain is RNA-splicing ligase RtcB homolog 1 from Entamoeba histolytica (strain ATCC 30459 / HM-1:IMSS / ABRM).